A 405-amino-acid chain; its full sequence is Probable glucan 1,3-beta-glucosidase A (405 aa).

A signal peptide spans 1–26 (MFPRISQAAILAHSLLAVCTSAATLA). The active-site Proton donor is glutamate 198. 2 disulfide bridges follow: cysteine 278–cysteine 403 and cysteine 304–cysteine 330. Glutamate 296 acts as the Nucleophile in catalysis.

The protein belongs to the glycosyl hydrolase 5 (cellulase A) family. Monomer. It depends on Mn(2+) as a cofactor.

It is found in the secreted. The enzyme catalyses Successive hydrolysis of beta-D-glucose units from the non-reducing ends of (1-&gt;3)-beta-D-glucans, releasing alpha-glucose.. Beta-glucanases participate in the metabolism of beta-glucan, the main structural component of the cell wall. It could also function biosynthetically as a transglycosylase. In Emericella nidulans (strain FGSC A4 / ATCC 38163 / CBS 112.46 / NRRL 194 / M139) (Aspergillus nidulans), this protein is Probable glucan 1,3-beta-glucosidase A (exgA).